A 360-amino-acid polypeptide reads, in one-letter code: Beta-1,3-N-acetylglucosaminyltransferase manic fringe (360 aa).

Topologically, residues 1–5 (MILRR) are cytoplasmic. Residues 6–26 (LFHVLPAFAFTLFILVLLDLQ) form a helical; Signal-anchor for type II membrane protein membrane-spanning segment. The Lumenal portion of the chain corresponds to 27–360 (LRTRSDQKPQ…ALSWNQHVMH (334 aa)). The segment at 51 to 74 (TTAENQHRDGAHEKEKAEGQKWTE) is disordered. Positions 55–74 (NQHRDGAHEKEKAEGQKWTE) are enriched in basic and acidic residues. Substrate is bound at residue Arg100. 2 disulfides stabilise this stretch: Cys139-Cys150 and Cys168-Cys231. Asp172 lines the substrate pocket. Mn(2+) is bound at residue Asp173. N-linked (GlcNAc...) asparagine glycosylation is present at Asn214. The active site involves Asp261. His285 contributes to the Mn(2+) binding site. Cys335 and Cys344 are joined by a disulfide.

Belongs to the glycosyltransferase 31 family. The cofactor is Mn(2+).

The protein resides in the golgi apparatus membrane. It carries out the reaction 3-O-(alpha-L-fucosyl)-L-threonyl-[EGF-like domain protein] + UDP-N-acetyl-alpha-D-glucosamine = 3-O-(N-acetyl-beta-D-glucosaminyl-(1-&gt;3)-alpha-L-fucosyl)-L-threonyl-[EGF-like domain protein] + UDP + H(+). It catalyses the reaction 3-O-(alpha-L-fucosyl)-L-seryl-[EGF-like domain protein] + UDP-N-acetyl-alpha-D-glucosamine = 3-O-(N-acetyl-beta-D-glucosaminyl-(1-&gt;3)-alpha-L-fucosyl)-L-seryl-[EGF-like domain protein] + UDP + H(+). Functionally, glycosyltransferase that initiates the elongation of O-linked fucose residues attached to EGF-like repeats in the extracellular domain of Notch molecules. In Danio rerio (Zebrafish), this protein is Beta-1,3-N-acetylglucosaminyltransferase manic fringe.